The sequence spans 85 residues: Homeobox protein liguleless 3 (85 aa).

One can recognise an ELK domain in the interval 1–21 (ELKEMLLKKYSGCLSRLRSEF). The segment at residues 22-85 (LKKRKKGKLP…NQRKRHWKPS (64 aa)) is a DNA-binding region (homeobox; TALE-type).

This sequence belongs to the TALE/KNOX homeobox family.

The protein resides in the nucleus. Its function is as follows. Probably binds to the DNA sequence 5'-TGAC-3'. The protein is Homeobox protein liguleless 3 (LG3) of Zea mays (Maize).